The following is a 149-amino-acid chain: Ribonuclease pancreatic (149 aa).

Residues methionine 1–glycine 25 form the signal peptide. Lysine 32 and arginine 35 together coordinate substrate. The active-site Proton acceptor is the histidine 37. Cystine bridges form between cysteine 51/cysteine 109, cysteine 65/cysteine 120, cysteine 83/cysteine 135, and cysteine 90/cysteine 97. Asparagine 59 carries N-linked (GlcNAc...) asparagine glycosylation. Lysine 66–threonine 70 is a substrate binding site. The N-linked (GlcNAc...) asparagine glycan is linked to asparagine 87. 2 residues coordinate substrate: lysine 91 and arginine 110. The Proton donor role is filled by histidine 144.

This sequence belongs to the pancreatic ribonuclease family. As to quaternary structure, monomer. Interacts with and forms tight 1:1 complexes with RNH1. Dimerization of two such complexes may occur. Interaction with RNH1 inhibits this protein. Pancreas.

The protein localises to the secreted. It carries out the reaction an [RNA] containing cytidine + H2O = an [RNA]-3'-cytidine-3'-phosphate + a 5'-hydroxy-ribonucleotide-3'-[RNA].. It catalyses the reaction an [RNA] containing uridine + H2O = an [RNA]-3'-uridine-3'-phosphate + a 5'-hydroxy-ribonucleotide-3'-[RNA].. Functionally, endonuclease that catalyzes the cleavage of RNA on the 3' side of pyrimidine nucleotides. Acts on single-stranded and double-stranded RNA. The chain is Ribonuclease pancreatic (RNASE1) from Abrothrix jelskii (Jelski's altiplano mouse).